A 340-amino-acid polypeptide reads, in one-letter code: MKALVKREANKGIWLEQVPVPTPGPNEVLIKLEKTAICGTDLHIYLWDEWSQRTIRPGLTIGHEFVGRVAELGSAVTGYQVGQRVSAEGHIVCGHCRNCRGGRPHLCPNTVGIGVNVNGAFAEYMVMPASNLWLIPDQIPSELAAFFDPYGNAAHCALEFDVIGEDVLITGAGPIGIIAAGICKHIGARNVVVTDVNDFRLKLAADMGATRVVNVSKTSLKDVMADLHMEGFDVGLEMSGNPRAFNDMLDCMYHGGKIAMLGIMPRGAGCDWDKIIFKGLTVQGIYGRKMYETWYKMTQLVLSGFPLHKVLTHQLPIDDFQKGFDLMEEGKAGKVVLSWN.

Residue Cys38 coordinates Zn(2+). Residues Thr40 and His43 each act as charge relay system in the active site. Zn(2+) is bound by residues His63, Glu64, Cys93, Cys96, Cys99, and Cys107. Residues Ile175, Asp195, Arg200, 261–263 (LGI), and 285–286 (IY) contribute to the NAD(+) site.

This sequence belongs to the zinc-containing alcohol dehydrogenase family. In terms of assembly, homotetramer. Requires Zn(2+) as cofactor.

Its subcellular location is the cytoplasm. It carries out the reaction L-threonine + NAD(+) = (2S)-2-amino-3-oxobutanoate + NADH + H(+). It participates in amino-acid degradation; L-threonine degradation via oxydo-reductase pathway; glycine from L-threonine: step 1/2. In terms of biological role, catalyzes the NAD(+)-dependent oxidation of L-threonine to 2-amino-3-ketobutyrate. The sequence is that of L-threonine 3-dehydrogenase from Xanthomonas euvesicatoria pv. vesicatoria (strain 85-10) (Xanthomonas campestris pv. vesicatoria).